A 151-amino-acid polypeptide reads, in one-letter code: uncharacterized protein (151 aa).

This is an uncharacterized protein from Archaeoglobus fulgidus (strain ATCC 49558 / DSM 4304 / JCM 9628 / NBRC 100126 / VC-16).